Reading from the N-terminus, the 860-residue chain is Leucine--tRNA ligase (860 aa).

The short motif at 42 to 52 is the 'HIGH' region element; it reads PYPSGRLHMGH. Residues 619-623 carry the 'KMSKS' region motif; sequence KMSKS. Residue Lys-622 coordinates ATP.

It belongs to the class-I aminoacyl-tRNA synthetase family.

The protein localises to the cytoplasm. It catalyses the reaction tRNA(Leu) + L-leucine + ATP = L-leucyl-tRNA(Leu) + AMP + diphosphate. This Erwinia tasmaniensis (strain DSM 17950 / CFBP 7177 / CIP 109463 / NCPPB 4357 / Et1/99) protein is Leucine--tRNA ligase.